The sequence spans 344 residues: 4-hydroxy-2-oxovalerate aldolase (344 aa).

A Pyruvate carboxyltransferase domain is found at 8–260 (VTLHDMSLRD…NHGIDLYKIM (253 aa)). 16-17 (RD) contacts substrate. Asp-17 provides a ligand contact to Mn(2+). Catalysis depends on His-20, which acts as the Proton acceptor. Substrate is bound by residues Ser-170 and His-199. Mn(2+)-binding residues include His-199 and His-201. Tyr-290 contributes to the substrate binding site.

This sequence belongs to the 4-hydroxy-2-oxovalerate aldolase family.

The catalysed reaction is (S)-4-hydroxy-2-oxopentanoate = acetaldehyde + pyruvate. This Pseudoalteromonas translucida (strain TAC 125) protein is 4-hydroxy-2-oxovalerate aldolase (mhpE).